The primary structure comprises 528 residues: tRNA-2-methylthio-N(6)-dimethylallyladenosine synthase (528 aa).

One can recognise an MTTase N-terminal domain in the interval 19–134; it reads RTYEVRTYGC…LPTLLERARH (116 aa). Residues cysteine 28, cysteine 63, cysteine 97, cysteine 171, cysteine 175, and cysteine 178 each coordinate [4Fe-4S] cluster. Positions 157-387 constitute a Radical SAM core domain; it reads RDEIASGWVS…TALQERISHE (231 aa). One can recognise a TRAM domain in the interval 390 to 460; sequence QRVVGRTVEV…PFHLIADSVD (71 aa).

The protein belongs to the methylthiotransferase family. MiaB subfamily. Monomer. [4Fe-4S] cluster is required as a cofactor.

The protein resides in the cytoplasm. It carries out the reaction N(6)-dimethylallyladenosine(37) in tRNA + (sulfur carrier)-SH + AH2 + 2 S-adenosyl-L-methionine = 2-methylsulfanyl-N(6)-dimethylallyladenosine(37) in tRNA + (sulfur carrier)-H + 5'-deoxyadenosine + L-methionine + A + S-adenosyl-L-homocysteine + 2 H(+). In terms of biological role, catalyzes the methylthiolation of N6-(dimethylallyl)adenosine (i(6)A), leading to the formation of 2-methylthio-N6-(dimethylallyl)adenosine (ms(2)i(6)A) at position 37 in tRNAs that read codons beginning with uridine. This is tRNA-2-methylthio-N(6)-dimethylallyladenosine synthase from Clavibacter michiganensis subsp. michiganensis (strain NCPPB 382).